A 455-amino-acid chain; its full sequence is Mu-like prophage FluMu DNA circularization protein (455 aa).

The segment at residues 368–387 (VILDNADAEQWTSYAALEQY) is a DNA-binding region (H-T-H motif).

It to phage Mu protein N.

This Haemophilus influenzae (strain ATCC 51907 / DSM 11121 / KW20 / Rd) protein is Mu-like prophage FluMu DNA circularization protein.